We begin with the raw amino-acid sequence, 634 residues long: UPF0329 protein ECU11_2090 (634 aa).

2 stretches are compositionally biased toward basic and acidic residues: residues 354 to 365 (REEREKREESKG) and 397 to 407 (GESKEEDRGEE). The interval 354–438 (REEREKREES…KGSGEKRISE (85 aa)) is disordered. Residues 408–417 (GGVEAEDPLE) are compositionally biased toward acidic residues.

It belongs to the UPF0329 family.

This Encephalitozoon cuniculi (strain GB-M1) (Microsporidian parasite) protein is UPF0329 protein ECU11_2090.